Here is a 25-residue protein sequence, read N- to C-terminus: Pregnancy-associated glycoprotein 74 (25 aa).

Asn4 and Asn21 each carry an N-linked (GlcNAc...) asparagine glycan.

Belongs to the peptidase A1 family. In terms of processing, N-glycosylated. Placental cotyledons.

It localises to the secreted. The protein localises to the extracellular space. This Bison bison (American bison) protein is Pregnancy-associated glycoprotein 74.